A 458-amino-acid chain; its full sequence is O-acetyltransferase dmxR13 (458 aa).

Positions 211–231 are disordered; sequence ELARQISQPRPPPSSDGPPPP. Positions 219–231 are enriched in pro residues; that stretch reads PRPPPSSDGPPPP.

Belongs to the trichothecene 3-O-acetyltransferase family.

Its pathway is secondary metabolite biosynthesis. Its function is as follows. O-acetyltransferase; part of the gene cluster that mediates the biosynthesis of the dimeric xanthones cryptosporioptides. The pathway begins with the synthesis of atrochrysone thioester by the polyketide synthase dmx-nrPKS. The atrochrysone carboxyl ACP thioesterase dmxR1 then breaks the thioester bond and releases the atrochrysone carboxylic acid from dmx-nrPKS. Atrochrysone carboxylic acid is decarboxylated by the decarboxylase dmxR15, and oxidized by the anthrone oxygenase dmxR16 to yield emodin. Emodin is then reduced to emodin hydroquinone by the oxidoreductase dmxR7. A-ring reduction by the short chain dehydrogenase dmxR18, dehydration by the scytalone dehydratase-like protein dmxR17 and probable spontaneous re-oxidation, results in overall deoxygenation to chrysophanol. Baeyer-Villiger oxidation by the Baeyer-Villiger monooxygenase (BVMO) dmxR6 then yields monodictylactone in equilibrium with monodictyphenone. In the case of the cryptosporioptides biosynthesis, monodictylactone is reduced at C-12 to an alcohol (by the short chain dehydrogenases dmxR12 or dmxR8) and hydroxylated at C-5 by dmxR9, yielding the electron-rich aromatic which could eliminate H(2)O to form the ortho-quinonemethide, followed by tautomerisation to paraquinone and complete the formal reduction to produce the 10-methylgroup. Conjugate addition of C-4a-OH to the resulting paraquinone by the monooxygenase dmxR10 then gives cyclohexadienone, which is then reduced at C-5 by the short chain dehydrogenase dmxR3 to give the dihydroxanthone. The 6,7-epoxide in the cryptosporioptides could be introduced by the cytochrome P450 monooxygenase dmxL3. The highly reducing PKS dmxL2 manufactures butyrate, which is further carboxylated by dmxL1 to form ethylmalonate. It is not yet clear whether the carboxylation occurs while the butyrate is attached to the ACP of dmxL2, but this unusual fungal metabolite could then be esterified to O-5 by the O-acetyltransferase dmxR13. Finally, dimerization performed by dmxR5 gives the observed dimers cryptosporioptides A, B and C as the final products of the pathway. The protein is O-acetyltransferase dmxR13 of Cryptosporiopsis sp. (strain 8999).